Consider the following 294-residue polypeptide: Mimecan (294 aa).

An N-terminal signal peptide occupies residues 1-19 (MKTLQAAFFLVAFVPLVKP). Asparagine 61 carries N-linked (GlcNAc...) asparagine glycosylation. LRR repeat units follow at residues 108–127 (EAVP…FNKI), 128–151 (KRIA…GNMI), 152–175 (EEIE…ENRL), 176–195 (VKLP…QNRI), 196–221 (KSRG…HNAL), 222–242 (ESVP…HNNI), and 243–273 (TTIN…GNPI). 2 N-linked (GlcNAc...) asparagine glycosylation sites follow: asparagine 241 and asparagine 254. The cysteines at positions 251 and 284 are disulfide-linked.

It belongs to the small leucine-rich proteoglycan (SLRP) family. SLRP class III subfamily. Post-translationally, the composition of the N-linked chains or the substitution of the N-linked sites is different between embryonic and adult tissues. In terms of processing, contains keratan sulfate.

The protein localises to the secreted. It is found in the extracellular space. It localises to the extracellular matrix. Functionally, induces bone formation in conjunction with TGF-beta-1 or TGF-beta-2. This chain is Mimecan (OGN), found in Gallus gallus (Chicken).